A 537-amino-acid polypeptide reads, in one-letter code: O-phosphoserine--tRNA(Cys) ligase (537 aa).

Residues 186 to 188 (HMT), 231 to 233 (SAS), 273 to 274 (YY), and Asn317 each bind substrate.

This sequence belongs to the class-II aminoacyl-tRNA synthetase family. O-phosphoseryl-tRNA(Cys) synthetase subfamily. As to quaternary structure, homotetramer. Interacts with SepCysS.

It catalyses the reaction tRNA(Cys) + O-phospho-L-serine + ATP = O-phospho-L-seryl-tRNA(Cys) + AMP + diphosphate. In terms of biological role, catalyzes the attachment of O-phosphoserine (Sep) to tRNA(Cys). The sequence is that of O-phosphoserine--tRNA(Cys) ligase from Methanococcus maripaludis (strain C7 / ATCC BAA-1331).